The following is a 236-amino-acid chain: MTRRYWNINLEEMMEAGVHFGHGIKKWNPRMAPYIYANRKGIHITNLTKTARFLAEACDLVFDAASRGGQFLIVGTKKQAAALVARAAIKARCHYVNKKWLGGMLTNWSTTETRLHQFRDLRTEQKTGRLNRLPKRDAAILKRQLSHLQTYLGGIKYMTGLPDILIILDQQEEYTALRECITLGIPTICLIDTDCDPDLADLPIPANDDAMASIRLILNKLVFAICEGRSSSIRNP.

This sequence belongs to the universal ribosomal protein uS2 family.

It localises to the plastid. It is found in the chloroplast. The sequence is that of Small ribosomal subunit protein uS2c (rps2) from Oenothera biennis (German evening primrose).